A 145-amino-acid polypeptide reads, in one-letter code: 3-hydroxyacyl-[acyl-carrier-protein] dehydratase FabZ (145 aa).

H49 is a catalytic residue.

This sequence belongs to the thioester dehydratase family. FabZ subfamily.

It localises to the cytoplasm. It carries out the reaction a (3R)-hydroxyacyl-[ACP] = a (2E)-enoyl-[ACP] + H2O. Involved in unsaturated fatty acids biosynthesis. Catalyzes the dehydration of short chain beta-hydroxyacyl-ACPs and long chain saturated and unsaturated beta-hydroxyacyl-ACPs. This chain is 3-hydroxyacyl-[acyl-carrier-protein] dehydratase FabZ, found in Ehrlichia ruminantium (strain Gardel).